A 227-amino-acid chain; its full sequence is Uracil-DNA glycosylase (227 aa).

Catalysis depends on D68, which acts as the Proton acceptor.

This sequence belongs to the uracil-DNA glycosylase (UDG) superfamily. UNG family.

Its subcellular location is the cytoplasm. The catalysed reaction is Hydrolyzes single-stranded DNA or mismatched double-stranded DNA and polynucleotides, releasing free uracil.. Its function is as follows. Excises uracil residues from the DNA which can arise as a result of misincorporation of dUMP residues by DNA polymerase or due to deamination of cytosine. The chain is Uracil-DNA glycosylase from Mycobacterium ulcerans (strain Agy99).